The primary structure comprises 258 residues: Ciliogenesis and planar polarity effector 2 (258 aa).

The tract at residues 51–258 is small GTPase-like; that stretch reads IDTASYKIFV…LPSSPESAPG (208 aa). Serine 64, glycine 65, glycine 67, lysine 68, threonine 69, alanine 70, isoleucine 82, histidine 84, threonine 87, lysine 176, aspartate 178, and serine 206 together coordinate GTP.

Belongs to the small GTPase superfamily. Rab family. In terms of assembly, interacts with FUZ. Associates with the CPLANE (ciliogenesis and planar polarity effectors) complex via its interaction with FUZ.

The protein resides in the cytoplasm. It is found in the cytoskeleton. It localises to the cilium basal body. The protein localises to the microtubule organizing center. Its subcellular location is the centrosome. The protein resides in the centriole. Required for efficient primary cilia initiation, regulating a late step in cilia initiation. Plays a role in the final maturation of the mother centriole and ciliary vesicle that allows extension of the ciliary axoneme. In Mus musculus (Mouse), this protein is Ciliogenesis and planar polarity effector 2 (Cplane2).